The sequence spans 308 residues: Polyketide transferase claH (308 aa).

The segment at 50-280 is abhydrolase domain; it reads SDIAVYFSQQ…RVEVAAGKSH (231 aa).

The protein belongs to the polyketide transferase af380 family.

The protein operates within secondary metabolite biosynthesis. Polyketide transferase; part of the cla gene cluster that produces clavatol and ortho-quinone methide. The clavatol biosynthesis cluster cla and the terrestric acid cluster tra are both involved in the production of peniphenones and penilactones. The non-reducing PKS claF is responsible for the formation of clavatol from successive condensations of 3 malonyl-CoA units, presumably with a simple acetyl-CoA starter unit, and 2 methylation steps. The esterase claE probably collaborates with claF by catalyzing the hydrolysis of ACP-bound acyl intermediates to free the ACP from stalled intermediates. The clavatol oxidase claD then converts clavatol to hydroxyclavatol. Spontaneous dehydration of hydroxyclavatol leads to the accumulation of the highly active ortho-quinone methide. On the other hand, the PKS-NRPS hybrid traA is involved in the formation of crustosic acid, with the help of traB and traD. The polyketide synthase module (PKS) of traA is responsible for the synthesis of the polyketide backbone via the condensation of an acetyl-CoA starter unit with 3 malonyl-CoA units. The downstream nonribosomal peptide synthetase (NRPS) module then amidates the carboxyl end of the polyketide with L-malic acid. Because traA lacks a designated enoylreductase (ER) domain, the required activity is provided the enoyl reductase traG. Crustosic acid undergoes decarboxylation and isomerization to the terrestric acid, catalyzed by the 2-oxoglutarate-dependent dioxygenase traH. Both acids are further converted to the 2 gamma-butyrolactones (R)-5-methyltetronic acid and (S)-5-carboxylmethyltetronic acid, with involvement of the cytochrome P450 monooxygenase claJ. Spontaneous addition of the methide to these gamma-butyrolactones leads to peniphenone D and penilactone D, which undergo again stereospecific attacking by methide to give penilactones A and B. The function of the polyketide transferase claH has not been investigated yet. The polypeptide is Polyketide transferase claH (Penicillium crustosum (Blue mold fungus)).